Here is a 397-residue protein sequence, read N- to C-terminus: Odorant receptor 22b (397 aa).

The Cytoplasmic segment spans residues 1 to 49 (MLSQFFPHIKEKPLSERVKSRDAFVYLDRVMWSFGWTVPENKRWDLHYK). Residues 50–70 (LWSTFVTLLIFILLPISVSVE) form a helical membrane-spanning segment. Residues 71-85 (YIQRFKTFSAGEFLS) lie on the Extracellular side of the membrane. The chain crosses the membrane as a helical span at residues 86 to 105 (SIQIGVNMYGSSFKSYLTMM). Residues 106–143 (GYKKRQEAKMSLDELDKRCVCDEERTIVHRHVALGNFC) lie on the Cytoplasmic side of the membrane. A helical membrane pass occupies residues 144–164 (YIFYHIAYTSFLISNFLSFIM). At 165–194 (KRIHAWRMYFPYVDPEKQFYISSIAEVILR) the chain is on the extracellular side. The chain crosses the membrane as a helical span at residues 195-215 (GWAVFMDLCTDVCPLISMVIA). The Cytoplasmic segment spans residues 216–268 (RCHITLLKQRLRNLRSEPGRTEDEYLKELADCVRDHRLILDYVDALRSVFSGT). The helical transmembrane segment at 269–289 (IFVQFLLIGIVLGLSMINIMF) threads the bilayer. The Extracellular segment spans residues 290–295 (FSTLST). The helical transmembrane segment at 296 to 316 (GVAVVLFMSCVSMQTFPFCYL) threads the bilayer. The Cytoplasmic segment spans residues 317-347 (CNMIMDDCQEMADSLFQSDWTSADRRYKSTL). A helical transmembrane segment spans residues 348–368 (VYFLHNLQQPIILTAGGVFPI). Over 369–397 (SMQTNLNMVKLAFTVVTIVKQFNLAEKFQ) the chain is Extracellular.

It belongs to the insect chemoreceptor superfamily. Heteromeric odorant receptor channel (TC 1.A.69) family. Or2a subfamily. Interacts with Orco, via conserved C-terminal cytoplasmic loops. Complexes exist early in the endomembrane system in olfactory sensory neurons (OSNs), coupling these complexes to the conserved ciliary trafficking pathway. In terms of tissue distribution, expressed with Orco in 20-22 sensory neurons on the medial-proximal edge of the antenna. This expression pattern matches the distribution of the large sensilla basiconica. Expression is first seen at 60 hours APF in a subset of cells restricted to a subregion of the developing antenna. Expression continues throughout antennal development. Expressed in the ab3A neuron which responds to ethyl butyrate.

The protein localises to the cell membrane. Its function is as follows. Odorant receptor which mediates acceptance or avoidance behavior, depending on its substrates. The odorant receptor repertoire encodes a large collection of odor stimuli that vary widely in identity, intensity, and duration. Involved in the behavioral responses to esters. Complexes with Orco to form odorant-sensing units, providing sensitive and prolonged odorant signaling and calcium permeability. They are necessary and sufficient to promote functional reconstitution of odor-evoked signaling in sensory neurons that normally respond only to carbon dioxide. In Drosophila melanogaster (Fruit fly), this protein is Odorant receptor 22b (Or22b).